The primary structure comprises 330 residues: MAPEENAGTELLLQSFERRFLAARTLRSFPWQSLEAKLRDSSDSELLRDILHKTVKHPVCVKHPPSVKYARCFLSELIKKHEAVHTEPLDELYEALAETLMAKESTQGHRSYLLPSGGSVTLSESTAIISYGTTGLVTWDAALYLAEWAIENPAVFTNRTVLELGSGAGLTGLAICKMCRPRAYIFSDCHSRVLEQLRGNVLLNGLSLEADITAKLDSPRVTVAQLDWDVATVHQLSAFQPDVVIAADVLYCPEAIMSLVGVLRRLAACREHQRAPEVYVAFTVRNPETCQLFTTELGRAGIRWEVEPRHEQKLFPYEEHLEMAMLNLTL.

At Met-1 the chain carries N-acetylmethionine. S-adenosyl-L-methionine-binding positions include Trp-139, 165 to 167 (GSG), Trp-228, and Ala-247.

Belongs to the class I-like SAM-binding methyltransferase superfamily. EEF2KMT family. As to quaternary structure, interacts with FAM86B2 and FAM86C1P.

It localises to the cytoplasm. The catalysed reaction is L-lysyl-[protein] + 3 S-adenosyl-L-methionine = N(6),N(6),N(6)-trimethyl-L-lysyl-[protein] + 3 S-adenosyl-L-homocysteine + 3 H(+). Its function is as follows. Catalyzes the trimethylation of eukaryotic elongation factor 2 (EEF2) on 'Lys-525'. The polypeptide is Protein-lysine N-methyltransferase EEF2KMT (Homo sapiens (Human)).